Here is an 852-residue protein sequence, read N- to C-terminus: Metastasis-associated in colon cancer protein 1 (852 aa).

S19 carries the phosphoserine modification. In terms of domain architecture, ZU5 spans 212–349; it reads VTIACKVNHQ…LSQVMYLVVA (138 aa). The SH3 domain maps to 549–619; the sequence is NFSNYGVTLK…HCKNVKVISK (71 aa).

In terms of assembly, interacts with FASLG. Preferentially expressed in metastasizing tumors.

The protein resides in the cytoplasm. It is found in the nucleus. Its function is as follows. Acts as a transcription activator for MET and as a key regulator of HGF-MET signaling. Promotes cell motility, proliferation and hepatocyte growth factor (HGF)-dependent scattering in vitro and tumor growth and metastasis in vivo. The sequence is that of Metastasis-associated in colon cancer protein 1 (MACC1) from Homo sapiens (Human).